We begin with the raw amino-acid sequence, 370 residues long: Proto-oncogene Wnt-1 (370 aa).

The N-terminal stretch at 1–27 (MGLWALLPSWVSTTLLLALTALPAALA) is a signal peptide. A glycan (N-linked (GlcNAc...) asparagine) is linked at Asn-29. 11 cysteine pairs are disulfide-bonded: Cys-93-Cys-104, Cys-143-Cys-151, Cys-153-Cys-170, Cys-218-Cys-232, Cys-220-Cys-227, Cys-299-Cys-330, Cys-315-Cys-325, Cys-329-Cys-369, Cys-345-Cys-360, Cys-347-Cys-357, and Cys-352-Cys-353. Ser-224 carries O-palmitoleoyl serine; by PORCN lipidation. N-linked (GlcNAc...) asparagine glycans are attached at residues Asn-316 and Asn-346. A glycan (N-linked (GlcNAc...) asparagine) is linked at Asn-359.

Belongs to the Wnt family. In terms of assembly, forms a soluble 1:1 complex with AFM; this prevents oligomerization and is required for prolonged biological activity. The complex with AFM may represent the physiological form in body fluids. Interacts with PORCN. Interacts with RSPO1, RSPO2 and RSPO3. Interacts with WLS. Post-translationally, palmitoleoylation is required for efficient binding to frizzled receptors. Palmitoleoylation is necessary for proper trafficking to cell surface. Depalmitoleoylated by NOTUM, leading to inhibit Wnt signaling pathway. Testis and mid-gestational embryos. In the testis, detected only in postmeiotic germ cells undergoing differentiation from round spermatids into mature spermatozoa. In the embryos, expression is restricted to the developing CNS in regions of the neural tube other than the telencephalon. Expressed in osteoblast; expression levels increase with advancing osteoblast differentiation. Expressed in the brain, femur, spleen, and hematopoietic bone marrow.

It localises to the secreted. The protein localises to the extracellular space. Its subcellular location is the extracellular matrix. In terms of biological role, ligand for members of the frizzled family of seven transmembrane receptors. Acts in the canonical Wnt signaling pathway by promoting beta-catenin-dependent transcriptional activation. In some developmental processes, is also a ligand for the coreceptor RYK, thus triggering Wnt signaling. Plays an essential role in the development of the embryonic brain and central nervous system (CNS). Has a role in osteoblast function, bone development and bone homeostasis. This is Proto-oncogene Wnt-1 (Wnt1) from Mus musculus (Mouse).